Consider the following 129-residue polypeptide: Large ribosomal subunit protein bL12 (129 aa).

It belongs to the bacterial ribosomal protein bL12 family. Homodimer. Part of the ribosomal stalk of the 50S ribosomal subunit. Forms a multimeric L10(L12)X complex, where L10 forms an elongated spine to which 2 to 4 L12 dimers bind in a sequential fashion. Binds GTP-bound translation factors.

In terms of biological role, forms part of the ribosomal stalk which helps the ribosome interact with GTP-bound translation factors. Is thus essential for accurate translation. The sequence is that of Large ribosomal subunit protein bL12 from Pelotomaculum thermopropionicum (strain DSM 13744 / JCM 10971 / SI).